The primary structure comprises 348 residues: 3-isopropylmalate dehydrogenase (348 aa).

76 to 87 is a binding site for NAD(+); that stretch reads GPKWTDPNNRPE. Residues Arg94, Arg104, Arg132, and Asp217 each contribute to the substrate site. Asp217, Asp241, and Asp245 together coordinate Mg(2+). 275–287 serves as a coordination point for NAD(+); it reads GSAPDIAGKNVAN.

The protein belongs to the isocitrate and isopropylmalate dehydrogenases family. LeuB type 1 subfamily. As to quaternary structure, homodimer. The cofactor is Mg(2+). It depends on Mn(2+) as a cofactor.

The protein resides in the cytoplasm. It catalyses the reaction (2R,3S)-3-isopropylmalate + NAD(+) = 4-methyl-2-oxopentanoate + CO2 + NADH. Its pathway is amino-acid biosynthesis; L-leucine biosynthesis; L-leucine from 3-methyl-2-oxobutanoate: step 3/4. In terms of biological role, catalyzes the oxidation of 3-carboxy-2-hydroxy-4-methylpentanoate (3-isopropylmalate) to 3-carboxy-4-methyl-2-oxopentanoate. The product decarboxylates to 4-methyl-2 oxopentanoate. The protein is 3-isopropylmalate dehydrogenase of Staphylococcus aureus (strain NCTC 8325 / PS 47).